The sequence spans 159 residues: D-aminoacyl-tRNA deacylase (159 aa).

A Gly-cisPro motif, important for rejection of L-amino acids motif is present at residues 142–143; the sequence is GP.

This sequence belongs to the DTD family. In terms of assembly, homodimer.

It localises to the cytoplasm. The catalysed reaction is glycyl-tRNA(Ala) + H2O = tRNA(Ala) + glycine + H(+). It catalyses the reaction a D-aminoacyl-tRNA + H2O = a tRNA + a D-alpha-amino acid + H(+). Functionally, an aminoacyl-tRNA editing enzyme that deacylates mischarged D-aminoacyl-tRNAs. Also deacylates mischarged glycyl-tRNA(Ala), protecting cells against glycine mischarging by AlaRS. Acts via tRNA-based rather than protein-based catalysis; rejects L-amino acids rather than detecting D-amino acids in the active site. By recycling D-aminoacyl-tRNA to D-amino acids and free tRNA molecules, this enzyme counteracts the toxicity associated with the formation of D-aminoacyl-tRNA entities in vivo and helps enforce protein L-homochirality. The chain is D-aminoacyl-tRNA deacylase from Albidiferax ferrireducens (strain ATCC BAA-621 / DSM 15236 / T118) (Rhodoferax ferrireducens).